The sequence spans 393 residues: MGYYSLTEVTAVQYAKEHGYFEKKANVVCHEIGDGNLNYVFKLDDGEKSIIIKQALPYAKVVGESWPLSIKRATIESKALQIFAKYVPEYVPVVYSHDEELAVTVIEDLSRLTITRKGLIDGEEYPLLSQHIGHFLANVLFYTSDFGLQSEEKRVLEGTFVNPDLCKITEDLVFTDPFGHYDTNDYEPELQLTIDELWSDKTLKLKVAQYKYKFLTRKEALIHGDLHTGSIFSSPSETKVIDPEFATYGPFGFDIGQLIANLLLNALSREEEQRGVLFFHIEKTWSYFVETFTKLWIGEGVEAYTKEKQWLPIILQNIFTDAVGFAGCELIRRTIGLAHVADLDEITNKETRIQAKKQALSLGKELIKYESKNADIQLFRTLFQQTVSGGIKA.

Residues Asn38, Lys53, and 107-109 (EDL) each bind ATP. Substrate is bound at residue Asp225. 242–244 (DPE) contacts ATP. Position 332 (Arg332) interacts with substrate.

This sequence belongs to the methylthioribose kinase family. In terms of assembly, homodimer.

It carries out the reaction 5-(methylsulfanyl)-D-ribose + ATP = 5-(methylsulfanyl)-alpha-D-ribose 1-phosphate + ADP + H(+). Its pathway is amino-acid biosynthesis; L-methionine biosynthesis via salvage pathway; S-methyl-5-thio-alpha-D-ribose 1-phosphate from S-methyl-5'-thioadenosine (hydrolase route): step 2/2. In terms of biological role, catalyzes the phosphorylation of methylthioribose into methylthioribose-1-phosphate. In Bacillus cereus (strain AH820), this protein is Methylthioribose kinase.